The chain runs to 342 residues: Mitogen-activated protein kinase kinase kinase 20 (342 aa).

One can recognise a Protein kinase domain in the interval 3 to 268 (WVRGETIGFG…AEMLLNHSFV (266 aa)). Residue 9-17 (IGFGTFSTV) participates in ATP binding. The residue at position 18 (Ser-18) is a Phosphoserine. Thr-19 bears the Phosphothreonine mark. Lys-36 provides a ligand contact to ATP. Phosphotyrosine occurs at positions 41 and 66. 2 positions are modified to phosphoserine: Ser-93 and Ser-114. Asp-131 functions as the Proton acceptor in the catalytic mechanism. Positions 285–342 (KDEDKVLMSPKCPFEFDDWDSFTLDSNPSFDSPVERLGSLVSGSIPDWSVGGSWLTVR) are required for MKK3 binding.

The protein belongs to the protein kinase superfamily. Ser/Thr protein kinase family. As to quaternary structure, interacts with MKK3 and MPK18 via its C-terminal domain. Binds to MKK5. In terms of processing, autophosphorylates; active in phosphorylated state. Dephosphorylated by ABI1. Expressed in roots, seedlings, leaves, flower buds, flowers and siliques.

It is found in the nucleus. The protein resides in the cytoplasm. The enzyme catalyses L-seryl-[protein] + ATP = O-phospho-L-seryl-[protein] + ADP + H(+). It carries out the reaction L-threonyl-[protein] + ATP = O-phospho-L-threonyl-[protein] + ADP + H(+). Its activity is regulated as follows. Activated through serine, threonine and tyrosine phosphorylation, especially upon abscisic acid (ABA) treatment. Restricted activity by ABI1-mediated dephosphorylation. Mitogen-activated protein kinase kinase (MAPKK) that phosphorylates both MKK3 and MPK18 and regulate two separate signaling pathways involved in root microtubule functions. MAPKK which regulates abscisic acid (ABA) responses in a MAPKKK20-MKK5-MPK6 cascade involved in root growth (e.g. root cell division and elongation) and stomatal response, probably via MKK5 activation by protein phosphorylation and subsequent activation of MAPK6 by MKK5. Involved in various abiotic stresses (e.g. osmotic stress, cold and hydrogen peroxide) responses by phosphorylating and thus regulating MPK6 activity, in an ABA-independent manner. The sequence is that of Mitogen-activated protein kinase kinase kinase 20 from Arabidopsis thaliana (Mouse-ear cress).